The chain runs to 333 residues: Protein VTE6, chloroplastic (333 aa).

Residues 1 to 65 constitute a chloroplast transit peptide; that stretch reads MATISSTLLL…SRADGATAAA (65 aa). 6 helical membrane-spanning segments follow: residues 94–114, 126–146, 171–191, 248–268, 274–294, and 307–327; these read LLIFVLGSPLLVTGLSASGIA, AYGSAGFLLVAAYFVIGTAAT, VIGSSAAGCVCAFLSIYQVGG, TLAGLLASFFLASVGCFLGQI, AVCVLASQIANLGESIIGASF, and VVNVINISLGSIVAILMQQFI.

Belongs to the TMEM19 family.

It localises to the plastid. Its subcellular location is the chloroplast membrane. The catalysed reaction is phytyl phosphate + a ribonucleoside 5'-triphosphate = phytyl diphosphate + a ribonucleoside 5'-diphosphate. The enzyme catalyses phytyl phosphate + CTP = phytyl diphosphate + CDP. Its pathway is cofactor biosynthesis; tocopherol biosynthesis. Phytyl-phosphate kinase catalyzing the conversion of phytyl-monophosphate to phytyl-diphosphate. Involved in the activation and reutilization of phytol from chlorophyll degradation in plant metabolism, including tocopherol (vitamin E) biosynthesis. Involved in the biosynthesis of phylloquinone (vitamin K), which is required for the photosystem I (PSI) complex stability. The protein is Protein VTE6, chloroplastic of Arabidopsis thaliana (Mouse-ear cress).